Consider the following 94-residue polypeptide: Long neurotoxin LNTX8 (94 aa).

Positions 1 to 21 are cleaved as a signal peptide; the sequence is MKTLLLTLVVVTIMCLDLGYT. 5 disulfides stabilise this stretch: Cys-24-Cys-43, Cys-36-Cys-64, Cys-49-Cys-53, Cys-68-Cys-79, and Cys-80-Cys-85.

This sequence belongs to the three-finger toxin family. Long-chain subfamily. Type II alpha-neurotoxin sub-subfamily. As to expression, expressed by the venom gland.

Its subcellular location is the secreted. Functionally, binds with high affinity to muscular (alpha-1/CHRNA1) and neuronal (alpha-7/CHRNA7) nicotinic acetylcholine receptor (nAChR) and inhibits acetylcholine from binding to the receptor, thereby impairing neuromuscular and neuronal transmission. The sequence is that of Long neurotoxin LNTX8 from Ophiophagus hannah (King cobra).